The sequence spans 689 residues: Glycine--tRNA ligase beta subunit (689 aa).

It belongs to the class-II aminoacyl-tRNA synthetase family. Tetramer of two alpha and two beta subunits.

It is found in the cytoplasm. It catalyses the reaction tRNA(Gly) + glycine + ATP = glycyl-tRNA(Gly) + AMP + diphosphate. In Lacticaseibacillus paracasei (strain ATCC 334 / BCRC 17002 / CCUG 31169 / CIP 107868 / KCTC 3260 / NRRL B-441) (Lactobacillus paracasei), this protein is Glycine--tRNA ligase beta subunit.